A 288-amino-acid polypeptide reads, in one-letter code: Elongation factor Ts (288 aa).

The involved in Mg(2+) ion dislocation from EF-Tu stretch occupies residues 82 to 85; it reads TDFV.

The protein belongs to the EF-Ts family.

It localises to the cytoplasm. Associates with the EF-Tu.GDP complex and induces the exchange of GDP to GTP. It remains bound to the aminoacyl-tRNA.EF-Tu.GTP complex up to the GTP hydrolysis stage on the ribosome. The protein is Elongation factor Ts of Chlorobaculum tepidum (strain ATCC 49652 / DSM 12025 / NBRC 103806 / TLS) (Chlorobium tepidum).